A 268-amino-acid polypeptide reads, in one-letter code: Microtubule-associated protein RP/EB family member 1 (268 aa).

Ala-2 is modified (N-acetylalanine). Residues 14–116 (NLSRHDMLAW…FVQWFKKFFD (103 aa)) enclose the Calponin-homology (CH) domain. Residue Lys-66 is modified to N6-crotonyllysine. Tyr-124 is modified (phosphotyrosine). Residues 124-268 (YDPVAARQGQ…GGPQEEQEEY (145 aa)) are interaction with MTUS2/TIP150. Over residues 147-160 (NKPKKPLSSSSAAP) the composition is skewed to low complexity. The interval 147 to 184 (NKPKKPLSSSSAAPQRPITTHRTTATPKAGPGVVRKNP) is disordered. A Phosphoserine modification is found at Ser-155. Over residues 163-172 (PITTHRTTAT) the composition is skewed to polar residues. The region spanning 185–255 (GVGNGDDEAA…LYATDEGFVI (71 aa)) is the EB1 C-terminal domain. The interval 185 to 268 (GVGNGDDEAA…GGPQEEQEEY (84 aa)) is interaction with CDK5RAP2. The interval 206 to 211 (TVEDLE) is interaction with APC. Positions 208-268 (EDLEKERDFY…GGPQEEQEEY (61 aa)) are DCTN1-binding. Lys-220 is subject to N6-acetyllysine. Residues 220–242 (KLRNIELICQENEGENNPVLQRI) form an APC-binding region. Residues 232 to 255 (EGENNPVLQRIVDILYATDEGFVI) are interaction with SKA1.

It belongs to the MAPRE family. Homodimer. Heterodimer with MAPRE3. Interacts with DCTN1, DCTN2, TERF1 and dynein intermediate chain. Interaction with DIAPH1 and DIAPH2. Interacts (via C-terminal residues 206-211) with APC (via C-terminal residues 2674-2845); the interaction inhibits association with and bundling of F-actin. Interacts with CLASP2, DST, KIF2C and STIM1; probably required for their targeting to the growing microtubule plus ends. Interacts with MTUS2; interaction is direct and probably targets MTUS2 to microtubules. Interacts (via C-terminus) with SKA1 (via SXIP motif); the interaction is direct and stabilizes the kinetochore-microtubule attachment of the SKA1 complex. Interacts with APC2. Interacts with CLASP1. Interacts with CDK5RAP2. Interacts with MACF1. Interacts with RABL2/RABL2A; binds preferentially to GTP-bound RABL2. Interacts with KCNAB2. Interacts (via C-terminus) with CLIP1. Interacts with SLAIN2 and SLAIN1. Interacts with KIF18B; this interaction is required for efficient accumulation of KIF18B at microtubule plus ends. Interacts with MISP. Interacts with KNSTRN. Interacts with NCKAP5L. Interacts with CAMSAP2. Interacts with PDE4DIP isoform 13/MMG8/SMYLE; this interaction is required for its recruitment to the Golgi apparatus. Forms a pericentrosomal complex with AKAP9, CDK5RAP2 and PDE4DIP isoform 13/MMG8/SMYLE; within this complex, MAPRE1 binding to CDK5RAP2 may be mediated by PDE4DIP. Interacts with AKNA. Interacts with GAS2L1, GAS2L2, and GAS2L3. In terms of processing, acetylation at Lys-220 by KAT2B/PCAF promotes dynamic kinetochore-microtubule interactions in early mitosis. Crotonylated by KAT5 during mitosis, promoting astral microtubule plasticity and dynamic connection between astral microtubules and the cortex during mitotic chromosome segregation, thereby ensuring accurate spindle positioning in mitosis. Decrotonylated by HDAC3.

The protein resides in the cytoplasm. Its subcellular location is the cytoskeleton. The protein localises to the microtubule organizing center. It is found in the centrosome. It localises to the golgi apparatus. The protein resides in the spindle. Its subcellular location is the spindle pole. In terms of biological role, plus-end tracking protein (+TIP) that binds to the plus-end of microtubules and regulates the dynamics of the microtubule cytoskeleton. Recruits other +TIP proteins to microtubules by binding to a conserved Ser-X-Leu-Pro (SXLP) motif in their polypeptide chains. Promotes cytoplasmic microtubule nucleation and elongation. Involved in mitotic spindle positioning by stabilizing microtubules and promoting dynamic connection between astral microtubules and the cortex during mitotic chromosome segregation. Assists chromosome alignment in metaphase by recruiting the SKA complex to the spindle and stabilizing its interactions with microtubule bundles (K-fibers). Also acts as a regulator of minus-end microtubule organization: interacts with the complex formed by AKAP9 and PDE4DIP, leading to recruit CAMSAP2 to the Golgi apparatus, thereby tethering non-centrosomal minus-end microtubules to the Golgi, an important step for polarized cell movement. Promotes elongation of CAMSAP2-decorated microtubule stretches on the minus-end of microtubules. Acts as a regulator of autophagosome transport via interaction with CAMSAP2. Functions downstream of Rho GTPases and DIAPH1 in stable microtubule formation. May play a role in cell migration. The polypeptide is Microtubule-associated protein RP/EB family member 1 (MAPRE1) (Bos taurus (Bovine)).